The sequence spans 386 residues: IgA receptor (386 aa).

The N-terminal stretch at 1–41 (MARKDTNKQYSLRKLKTGTASVAVAVAVLGAGFANQTEVKA) is a signal peptide. An igA-binding region spans residues 42 to 152 (AEIKKPQADS…QKKHQQEQQQ (111 aa)). 7 stretches are compositionally biased toward basic and acidic residues: residues 79-88 (YADDKEKDPQ), 97-128 (QDLR…EQLE), 134-166 (EADK…DKQI), 174-201 (LSRD…EKQI), 209-221 (LSRD…EAKK), 233-243 (EHQKLKEDKQI), and 251-267 (LSRD…KVEA). 2 disordered regions span residues 79–221 (YADD…EAKK) and 233–268 (EHQK…VEAD). 3 C repeats span residues 158–192 (QKLA…EAEH), 193–227 (QKLK…EADL), and 235–269 (QKLK…EADL). D repeat units lie at residues 302 to 307 (ARLEAE), 308 to 313 (AKALKE), 316 to 321 (AKQAEE), and 323 to 328 (AKLKGN). Residues 323–360 (AKLKGNQTPNAKVAPQANRSRSAMTQQKRTLPSTGETA) are disordered. Residues 339–359 (ANRSRSAMTQQKRTLPSTGET) are compositionally biased toward polar residues. An LPXTG sorting signal motif is present at residues 353–357 (LPSTG). At threonine 356 the chain carries Pentaglycyl murein peptidoglycan amidated threonine. The propeptide at 357 to 386 (GETANPFFTAAAATVMVSAGMLALKRKEEN) is removed by sortase.

This sequence belongs to the M protein family.

The protein localises to the secreted. Its subcellular location is the cell wall. In terms of biological role, binds IgA of both subclasses, and also binds polyclonal IgG weakly. The polypeptide is IgA receptor (arp4) (Streptococcus pyogenes).